A 295-amino-acid chain; its full sequence is Bifunctional protein FolD (295 aa).

Residues 166–168, Ser-195, and Ile-236 contribute to the NADP(+) site; that span reads GRS.

The protein belongs to the tetrahydrofolate dehydrogenase/cyclohydrolase family. Homodimer.

The enzyme catalyses (6R)-5,10-methylene-5,6,7,8-tetrahydrofolate + NADP(+) = (6R)-5,10-methenyltetrahydrofolate + NADPH. It carries out the reaction (6R)-5,10-methenyltetrahydrofolate + H2O = (6R)-10-formyltetrahydrofolate + H(+). The protein operates within one-carbon metabolism; tetrahydrofolate interconversion. Functionally, catalyzes the oxidation of 5,10-methylenetetrahydrofolate to 5,10-methenyltetrahydrofolate and then the hydrolysis of 5,10-methenyltetrahydrofolate to 10-formyltetrahydrofolate. This chain is Bifunctional protein FolD, found in Chlorobium phaeovibrioides (strain DSM 265 / 1930) (Prosthecochloris vibrioformis (strain DSM 265)).